The sequence spans 287 residues: Phosphate transport system permease protein PstA (287 aa).

6 helical membrane passes run 22–42, 70–90, 115–135, 138–158, 199–219, and 255–275; these read ISCI…WTLI, AFLG…PVGI, ILLS…YVMH, GHFS…PIVV, ILTG…PLLF, and LLAW…SLGA. The ABC transmembrane type-1 domain maps to 71–279; the sequence is FLGSAIMCLL…LVSLGARALL (209 aa).

It belongs to the binding-protein-dependent transport system permease family. CysTW subfamily.

The protein resides in the cell inner membrane. Part of a binding-protein-dependent transport system for phosphate; probably responsible for the translocation of the substrate across the membrane. This is Phosphate transport system permease protein PstA (pstA) from Xylella fastidiosa (strain Temecula1 / ATCC 700964).